The sequence spans 428 residues: Serine--tRNA ligase (428 aa).

Residue 231-233 coordinates L-serine; it reads TAE. 262 to 264 is an ATP binding site; that stretch reads RSE. Glu-285 provides a ligand contact to L-serine. 349–352 lines the ATP pocket; sequence EISS. Ser-385 contributes to the L-serine binding site.

This sequence belongs to the class-II aminoacyl-tRNA synthetase family. Type-1 seryl-tRNA synthetase subfamily. In terms of assembly, homodimer. The tRNA molecule binds across the dimer.

Its subcellular location is the cytoplasm. The catalysed reaction is tRNA(Ser) + L-serine + ATP = L-seryl-tRNA(Ser) + AMP + diphosphate + H(+). The enzyme catalyses tRNA(Sec) + L-serine + ATP = L-seryl-tRNA(Sec) + AMP + diphosphate + H(+). It functions in the pathway aminoacyl-tRNA biosynthesis; selenocysteinyl-tRNA(Sec) biosynthesis; L-seryl-tRNA(Sec) from L-serine and tRNA(Sec): step 1/1. Catalyzes the attachment of serine to tRNA(Ser). Is also able to aminoacylate tRNA(Sec) with serine, to form the misacylated tRNA L-seryl-tRNA(Sec), which will be further converted into selenocysteinyl-tRNA(Sec). This Staphylococcus aureus (strain USA300) protein is Serine--tRNA ligase.